We begin with the raw amino-acid sequence, 70 residues long: DNA-directed RNA polymerase subunit omega (70 aa).

This sequence belongs to the RNA polymerase subunit omega family. As to quaternary structure, the RNAP catalytic core consists of 2 alpha, 1 beta, 1 beta' and 1 omega subunit. When a sigma factor is associated with the core the holoenzyme is formed, which can initiate transcription.

The enzyme catalyses RNA(n) + a ribonucleoside 5'-triphosphate = RNA(n+1) + diphosphate. Promotes RNA polymerase assembly. Latches the N- and C-terminal regions of the beta' subunit thereby facilitating its interaction with the beta and alpha subunits. This chain is DNA-directed RNA polymerase subunit omega, found in Nitratiruptor sp. (strain SB155-2).